A 225-amino-acid chain; its full sequence is Small ribosomal subunit protein eS1 (225 aa).

The protein belongs to the eukaryotic ribosomal protein eS1 family.

The chain is Small ribosomal subunit protein eS1 from Methanococcus maripaludis (strain DSM 14266 / JCM 13030 / NBRC 101832 / S2 / LL).